A 903-amino-acid chain; its full sequence is Dual 3',5'-cyclic-AMP and -GMP phosphodiesterase 11A (903 aa).

GAF domains lie at 175–324 (DLTS…GIAI) and 356–512 (DLEK…GLGI). Residue serine 378 participates in 3',5'-cyclic GMP binding. In terms of domain architecture, PDEase spans 542 to 866 (SKTEVDKFKA…VKWEELDKKR (325 aa)). The Proton donor role is filled by histidine 618. 4 residues coordinate a divalent metal cation: histidine 622, histidine 658, aspartate 659, and aspartate 770. The interval 863–903 (DKKRQHDHGASVPASPCSAAEGSETGGVPCCSNNTPPTHVS) is disordered. The segment covering 893–903 (CSNNTPPTHVS) has biased composition (polar residues).

It belongs to the cyclic nucleotide phosphodiesterase family. The cofactor is a divalent metal cation.

It localises to the cytoplasm. The protein resides in the cytosol. The catalysed reaction is 3',5'-cyclic GMP + H2O = GMP + H(+). It catalyses the reaction 3',5'-cyclic AMP + H2O = AMP + H(+). Functionally, plays a role in signal transduction by regulating the intracellular concentration of cyclic nucleotides cAMP and cGMP. Catalyzes the hydrolysis of both cAMP and cGMP to 5'-AMP and 5'-GMP, respectively. The protein is Dual 3',5'-cyclic-AMP and -GMP phosphodiesterase 11A (pde11a) of Takifugu rubripes (Japanese pufferfish).